The following is a 129-amino-acid chain: Sulfurtransferase TusD (129 aa).

Cys79 acts as the Cysteine persulfide intermediate in catalysis.

This sequence belongs to the DsrE/TusD family. In terms of assembly, heterohexamer, formed by a dimer of trimers. The hexameric TusBCD complex contains 2 copies each of TusB, TusC and TusD. The TusBCD complex interacts with TusE.

The protein localises to the cytoplasm. Part of a sulfur-relay system required for 2-thiolation of 5-methylaminomethyl-2-thiouridine (mnm(5)s(2)U) at tRNA wobble positions. Accepts sulfur from TusA and transfers it in turn to TusE. The protein is Sulfurtransferase TusD of Pectobacterium carotovorum subsp. carotovorum (strain PC1).